A 56-amino-acid polypeptide reads, in one-letter code: Large ribosomal subunit protein bL33 (56 aa).

This sequence belongs to the bacterial ribosomal protein bL33 family.

The polypeptide is Large ribosomal subunit protein bL33 (Treponema denticola (strain ATCC 35405 / DSM 14222 / CIP 103919 / JCM 8153 / KCTC 15104)).